Reading from the N-terminus, the 465-residue chain is Cysteine--tRNA ligase (465 aa).

Residue Cys28 coordinates Zn(2+). A 'HIGH' region motif is present at residues 30 to 40 (MTVYDYCHLGH). Zn(2+) is bound by residues Cys209, His234, and Glu238. The 'KMSKS' region motif lies at 266–270 (KMSKS). An ATP-binding site is contributed by Lys269.

It belongs to the class-I aminoacyl-tRNA synthetase family. In terms of assembly, monomer. The cofactor is Zn(2+).

It is found in the cytoplasm. It carries out the reaction tRNA(Cys) + L-cysteine + ATP = L-cysteinyl-tRNA(Cys) + AMP + diphosphate. This is Cysteine--tRNA ligase from Methylococcus capsulatus (strain ATCC 33009 / NCIMB 11132 / Bath).